A 210-amino-acid chain; its full sequence is Outer-membrane lipoprotein LolB (210 aa).

Residues 1–19 (MNHLKSFFTALVAGFILTA) form the signal peptide. Cysteine 20 carries N-palmitoyl cysteine lipidation. Cysteine 20 carries the S-diacylglycerol cysteine lipid modification.

It belongs to the LolB family. Monomer.

The protein localises to the cell outer membrane. Functionally, plays a critical role in the incorporation of lipoproteins in the outer membrane after they are released by the LolA protein. In Mannheimia succiniciproducens (strain KCTC 0769BP / MBEL55E), this protein is Outer-membrane lipoprotein LolB.